A 235-amino-acid polypeptide reads, in one-letter code: NAD(P)H-hydrate epimerase (235 aa).

The YjeF N-terminal domain maps to Ala-18 to Met-221. Asn-65–Asp-69 lines the (6S)-NADPHX pocket. Asn-66 and Asp-127 together coordinate K(+). (6S)-NADPHX contacts are provided by residues Gly-131–Pro-137 and Asp-160. Position 163 (Ser-163) interacts with K(+).

Belongs to the NnrE/AIBP family. It depends on K(+) as a cofactor.

It catalyses the reaction (6R)-NADHX = (6S)-NADHX. The enzyme catalyses (6R)-NADPHX = (6S)-NADPHX. Catalyzes the epimerization of the S- and R-forms of NAD(P)HX, a damaged form of NAD(P)H that is a result of enzymatic or heat-dependent hydration. This is a prerequisite for the S-specific NAD(P)H-hydrate dehydratase to allow the repair of both epimers of NAD(P)HX. The chain is NAD(P)H-hydrate epimerase from Caenorhabditis elegans.